A 37-amino-acid chain; its full sequence is Cytochrome b6-f complex subunit 5 (37 aa).

A helical transmembrane segment spans residues 5-25 (ILLGIVLGMVVVTLAGLFVAA).

This sequence belongs to the PetG family. As to quaternary structure, the 4 large subunits of the cytochrome b6-f complex are cytochrome b6, subunit IV (17 kDa polypeptide, PetD), cytochrome f and the Rieske protein, while the 4 small subunits are PetG, PetL, PetM and PetN. The complex functions as a dimer.

It is found in the cellular thylakoid membrane. Its function is as follows. Component of the cytochrome b6-f complex, which mediates electron transfer between photosystem II (PSII) and photosystem I (PSI), cyclic electron flow around PSI, and state transitions. PetG is required for either the stability or assembly of the cytochrome b6-f complex. This is Cytochrome b6-f complex subunit 5 from Synechococcus sp. (strain JA-2-3B'a(2-13)) (Cyanobacteria bacterium Yellowstone B-Prime).